Consider the following 141-residue polypeptide: Sec-independent protein translocase protein TatB (141 aa).

A helical membrane pass occupies residues 1-21 (MFGISFSELLLVGLVALLVLG). The interval 74 to 141 (EAQKLLAPLT…SPPSETPRNP (68 aa)) is disordered. A compositionally biased stretch (pro residues) spans 89–115 (QETPPPAAESPAPSVPTPPPTSTPAVP). Residues 116-129 (PADAAAPPAVAAST) show a composition bias toward low complexity. The segment covering 130 to 141 (PPSPPSETPRNP) has biased composition (pro residues).

The protein belongs to the TatB family. As to quaternary structure, the Tat system comprises two distinct complexes: a TatABC complex, containing multiple copies of TatA, TatB and TatC subunits, and a separate TatA complex, containing only TatA subunits. Substrates initially bind to the TatABC complex, which probably triggers association of the separate TatA complex to form the active translocon.

The protein localises to the cell inner membrane. Its function is as follows. Part of the twin-arginine translocation (Tat) system that transports large folded proteins containing a characteristic twin-arginine motif in their signal peptide across membranes. Together with TatC, TatB is part of a receptor directly interacting with Tat signal peptides. TatB may form an oligomeric binding site that transiently accommodates folded Tat precursor proteins before their translocation. The polypeptide is Sec-independent protein translocase protein TatB (Pseudomonas aeruginosa (strain ATCC 15692 / DSM 22644 / CIP 104116 / JCM 14847 / LMG 12228 / 1C / PRS 101 / PAO1)).